The sequence spans 228 residues: uncharacterized protein (228 aa).

The 68-residue stretch at 11 to 78 (PPVNQQIYRI…PQRGSYVNKI (68 aa)) folds into the HTH gntR-type domain. Residues 38-57 (EKEVSVRFNVSRQPVREAFI) constitute a DNA-binding region (H-T-H motif).

This is an uncharacterized protein from Escherichia coli O6:H1 (strain CFT073 / ATCC 700928 / UPEC).